The primary structure comprises 84 residues: ATP synthase subunit c (84 aa).

The next 2 helical transmembrane spans lie at 9–29 (IIGASILLAFAALGTAIGFAI) and 54–74 (IVAGLLDAIAMIAVGISLLFI).

The protein belongs to the ATPase C chain family. F-type ATPases have 2 components, F(1) - the catalytic core - and F(0) - the membrane proton channel. F(1) has five subunits: alpha(3), beta(3), gamma(1), delta(1), epsilon(1). F(0) has three main subunits: a(1), b(2) and c(10-14). The alpha and beta chains form an alternating ring which encloses part of the gamma chain. F(1) is attached to F(0) by a central stalk formed by the gamma and epsilon chains, while a peripheral stalk is formed by the delta and b chains.

The protein resides in the cell inner membrane. F(1)F(0) ATP synthase produces ATP from ADP in the presence of a proton or sodium gradient. F-type ATPases consist of two structural domains, F(1) containing the extramembraneous catalytic core and F(0) containing the membrane proton channel, linked together by a central stalk and a peripheral stalk. During catalysis, ATP synthesis in the catalytic domain of F(1) is coupled via a rotary mechanism of the central stalk subunits to proton translocation. In terms of biological role, key component of the F(0) channel; it plays a direct role in translocation across the membrane. A homomeric c-ring of between 10-14 subunits forms the central stalk rotor element with the F(1) delta and epsilon subunits. This is ATP synthase subunit c from Actinobacillus pleuropneumoniae serotype 7 (strain AP76).